Reading from the N-terminus, the 554-residue chain is Solute carrier family 22 member 22 (554 aa).

The Cytoplasmic portion of the chain corresponds to 1–15 (MDFDEILHHVGDSGR). The helical transmembrane segment at 16 to 36 (FQICMIILLNILSLVLSPHDV) threads the bilayer. At 37-144 (LENFTAAIPA…DLVCDFQSFK (108 aa)) the chain is on the extracellular side. An N-linked (GlcNAc...) asparagine glycan is attached at N39. The chain crosses the membrane as a helical span at residues 145-165 (YYAQATSLAGHLVSCPLSGII). Residues 166-172 (SDRFGRK) lie on the Cytoplasmic side of the membrane. Residues 173–193 (PLLMYCSLAYGAVGTYCAFAP) traverse the membrane as a helical segment. N194 carries N-linked (GlcNAc...) asparagine glycosylation. Residues 194–199 (NFSVYC) lie on the Extracellular side of the membrane. The chain crosses the membrane as a helical span at residues 200–220 (VLRFLLSAFQSTILINSLILV). Over 221 to 231 (LEEASVQWHPT) the chain is Cytoplasmic. A helical membrane pass occupies residues 232 to 252 (IIVLSGLFNSIGQGVLGGLAY). The Extracellular portion of the chain corresponds to 253 to 258 (VISDWH). The helical transmembrane segment at 259-279 (LLQLAYALPFFIFFVLFCWVP) threads the bilayer. Residues 280 to 347 (ESVRWLIITG…DIFINPLIRK (68 aa)) lie on the Cytoplasmic side of the membrane. The helical transmembrane segment at 348–368 (IVLSNSSLLFAELFSFVGLLL) threads the bilayer. The Extracellular segment spans residues 369-376 (DVQLLGKN). Residues 377–397 (MFLTQIFLGAIDVPSKSLTYF) form a helical membrane-spanning segment. Over 398–405 (TIRNVSRR) the chain is Cytoplasmic. The chain crosses the membrane as a helical span at residues 406–426 (PLIAFLLLTTGSCITITIFIS). Residues 427–434 (EEMYVLRT) lie on the Extracellular side of the membrane. Residues 435-455 (IIFILGKGCFAAFTCISTTYI) form a helical membrane-spanning segment. The Cytoplasmic portion of the chain corresponds to 456–466 (NELSPVELRST). Residues 467–487 (LNGVFLAVVRLAGVLSALTLA) traverse the membrane as a helical segment. Topologically, residues 488–491 (TRKY) are extracellular. A helical transmembrane segment spans residues 492–512 (FVYLPMILYGVLPIVATISIL). At 513 to 554 (FLPETFNLPHTDIIKDMEKRKRLMSKNISKKEGQDFLETTEC) the chain is on the cytoplasmic side.

The protein belongs to the major facilitator (TC 2.A.1) superfamily. Organic cation transporter (TC 2.A.1.19) family. Specifically expressed in kidney where it is found in proximal convoluted tubules (at protein level). Colocalizes with the prostaglandin-inactivating enzyme HPGD in kidney (at protein level). Not detected in other tissues tested.

It is found in the basolateral cell membrane. In terms of biological role, sodium-independent organic anion transporter which exhibits high specificity for a subset of prostaglandins including prostaglandin E2 (PGE2), prostaglandin E1 (PGE1), prostaglandin F2-alpha (PGF2-alpha) and prostaglandin D2 (PGD2). This chain is Solute carrier family 22 member 22, found in Mus musculus (Mouse).